We begin with the raw amino-acid sequence, 74 residues long: U3-agatoxin-Ao1b (74 aa).

An N-terminal signal peptide occupies residues methionine 1–alanine 20. A propeptide spanning residues isoleucine 21 to arginine 34 is cleaved from the precursor. 4 disulfides stabilise this stretch: cysteine 37–cysteine 53, cysteine 44–cysteine 58, cysteine 52–cysteine 68, and cysteine 60–cysteine 66. Serine 72 is subject to Serine amide.

Belongs to the neurotoxin 07 (Beta/delta-agtx) family. 02 (aga-3) subfamily. In terms of tissue distribution, expressed by the venom gland.

The protein resides in the secreted. Functionally, insecticidal neurotoxin that induces an irreversible spastic paralysis when injected into insects. Modifies presynaptic voltage-gated sodium channels (Nav), causing them to open at the normal resting potential of the nerve. This leads to spontaneous release of neurotransmitter and repetitive action potentials in motor neurons. This chain is U3-agatoxin-Ao1b, found in Agelena orientalis (Funnel-web spider).